A 567-amino-acid chain; its full sequence is Protein NRT1/ PTR FAMILY 4.5 (567 aa).

A run of 12 helical transmembrane segments spans residues 30–50, 70–92, 99–118, 147–167, 189–209, 219–239, 326–346, 374–394, 411–431, 448–468, 491–511, and 535–555; these read GMLAASFVLAVEILENLAFLA, SSSEVTTFMATAFLLALLGGFLA, FVIFLISASIEFLGLILLTI, AFLFVGLYLVSLGIGGIKGSL, FFNYYVFCLSCGALVAVTFVV, WGFGVSTISIFLSILVFLLGS, IVLKMLPIFGCTIMLNCCLAQ, VFPVVFMLILAPTYDHLIIPF, IGVGLVLSIVAMAVAALVELK, LPITFLWIALQYLFLGSADLF, SLSWASLALGYYLSSVMVPIV, and LFYWLMCVLSVVNFLHYLFWA.

The protein belongs to the major facilitator superfamily. Proton-dependent oligopeptide transporter (POT/PTR) (TC 2.A.17) family. In terms of tissue distribution, expressed in flowers and siliques.

The protein resides in the membrane. Involved in abscisic acid transport. This chain is Protein NRT1/ PTR FAMILY 4.5 (NPF4.5), found in Arabidopsis thaliana (Mouse-ear cress).